Here is a 216-residue protein sequence, read N- to C-terminus: 3-isopropylmalate dehydratase small subunit (216 aa).

The protein belongs to the LeuD family. LeuD type 1 subfamily. In terms of assembly, heterodimer of LeuC and LeuD.

It carries out the reaction (2R,3S)-3-isopropylmalate = (2S)-2-isopropylmalate. It functions in the pathway amino-acid biosynthesis; L-leucine biosynthesis; L-leucine from 3-methyl-2-oxobutanoate: step 2/4. Its function is as follows. Catalyzes the isomerization between 2-isopropylmalate and 3-isopropylmalate, via the formation of 2-isopropylmaleate. This is 3-isopropylmalate dehydratase small subunit from Psychrobacter arcticus (strain DSM 17307 / VKM B-2377 / 273-4).